Consider the following 732-residue polypeptide: Prolyl tripeptidyl peptidase (732 aa).

An N-terminal signal peptide occupies residues M1–A24. Residues S603, D678, and H710 each act as charge relay system in the active site.

Belongs to the peptidase S9B family.

It carries out the reaction Hydrolysis of Xaa-Xaa-Pro-|-Yaa- releasing the N-terminal tripeptide of a peptide with Pro as the third residue (position P1) and where Yaa is not proline.. Functionally, serine proteinase. Releases tripeptides from the free amino terminus of proteins. Has a requirement for Pro in the P1 position, but is inactivated by Pro in the P1' position. This chain is Prolyl tripeptidyl peptidase, found in Porphyromonas gingivalis (strain ATCC 33277 / DSM 20709 / CIP 103683 / JCM 12257 / NCTC 11834 / 2561).